We begin with the raw amino-acid sequence, 413 residues long: Porin PorA (413 aa).

Residues 1–22 (MKKVVSSLLIILGAAMLIFAIA) form the signal peptide. The disordered stretch occupies residues 265–288 (TKSAADSKDDKKKDGDKKDEKSPE).

The protein belongs to the PorA family.

It is found in the secreted. The protein localises to the cell wall. Functionally, forms water-filled channels that favor the permeation of cations. This Corynebacterium resistens (strain DSM 45100 / JCM 12819 / GTC 2026 / SICGH 158) protein is Porin PorA.